The sequence spans 78 residues: Hainantoxin-XX.2 (78 aa).

The signal sequence occupies residues 1–23 (MKSATLLALSYLLIALYFLICEA). Positions 24 to 47 (EHSRYEEHEILEENMGDVVNLEQR) are excised as a propeptide. 3 cysteine pairs are disulfide-bonded: cysteine 49/cysteine 62, cysteine 56/cysteine 66, and cysteine 61/cysteine 77.

Belongs to the hainantoxin family. 20 subfamily. As to expression, expressed by the venom gland.

It is found in the secreted. In terms of biological role, moderately inhibits Kv1.1/KCNA1 and Kv1.2/KCNA2 and weakly inhibits Kv1.3/KCNA3, and Kv2.1/KCNB1 voltage-gated potassium channels. This chain is Hainantoxin-XX.2, found in Cyriopagopus hainanus (Chinese bird spider).